Reading from the N-terminus, the 209-residue chain is Ribosomal RNA large subunit methyltransferase E (209 aa).

S-adenosyl-L-methionine contacts are provided by G63, W65, D83, D99, and D124. K164 acts as the Proton acceptor in catalysis.

It belongs to the class I-like SAM-binding methyltransferase superfamily. RNA methyltransferase RlmE family.

The protein resides in the cytoplasm. The catalysed reaction is uridine(2552) in 23S rRNA + S-adenosyl-L-methionine = 2'-O-methyluridine(2552) in 23S rRNA + S-adenosyl-L-homocysteine + H(+). In terms of biological role, specifically methylates the uridine in position 2552 of 23S rRNA at the 2'-O position of the ribose in the fully assembled 50S ribosomal subunit. The protein is Ribosomal RNA large subunit methyltransferase E of Shewanella halifaxensis (strain HAW-EB4).